Reading from the N-terminus, the 1141-residue chain is Isoleucine--tRNA ligase (1141 aa).

A 'HIGH' region motif is present at residues 50 to 60 (PSANGMPGIHH). The short motif at 689 to 693 (KMSKR) is the 'KMSKS' region element. Lys-692 is an ATP binding site.

It belongs to the class-I aminoacyl-tRNA synthetase family. IleS type 2 subfamily. As to quaternary structure, monomer. Requires Zn(2+) as cofactor.

The protein resides in the cytoplasm. The catalysed reaction is tRNA(Ile) + L-isoleucine + ATP = L-isoleucyl-tRNA(Ile) + AMP + diphosphate. Functionally, catalyzes the attachment of isoleucine to tRNA(Ile). As IleRS can inadvertently accommodate and process structurally similar amino acids such as valine, to avoid such errors it has two additional distinct tRNA(Ile)-dependent editing activities. One activity is designated as 'pretransfer' editing and involves the hydrolysis of activated Val-AMP. The other activity is designated 'posttransfer' editing and involves deacylation of mischarged Val-tRNA(Ile). The chain is Isoleucine--tRNA ligase from Bacteroides fragilis (strain ATCC 25285 / DSM 2151 / CCUG 4856 / JCM 11019 / LMG 10263 / NCTC 9343 / Onslow / VPI 2553 / EN-2).